The primary structure comprises 482 residues: F-box/LRR-repeat protein At3g58930 (482 aa).

The region spanning 1–47 is the F-box domain; that stretch reads MDRVSNLPDGVRGHILSFLPAKHIALTSVLSKSWLNLWKLIPILDID. LRR repeat units follow at residues 122–150, 175–200, 222–248, 313–344, and 345–370; these read SYED…KIRN, SDLI…RMAS, GTGC…NYSD, ILYL…GIKS, and EEGR…IIEG.

The polypeptide is F-box/LRR-repeat protein At3g58930 (Arabidopsis thaliana (Mouse-ear cress)).